The sequence spans 368 residues: Flap endonuclease 1 (368 aa).

The tract at residues 1–104 (MGIHDLSKVI…GELLKRGARR (104 aa)) is N-domain. D34 is a binding site for Mg(2+). Residues R47 and R70 each coordinate DNA. D86 contributes to the Mg(2+) binding site. The interval 103 to 123 (RRKEAQANLEEATEQGDTEQM) is disordered. Residues 122–251 (QMEKFSRRLV…QKAYQLIKEH (130 aa)) are I-domain. E158, E160, D179, and D181 together coordinate Mg(2+). Residue E158 participates in DNA binding. 2 residues coordinate DNA: G229 and D231. D231 serves as a coordination point for Mg(2+). An interaction with PCNA region spans residues 334-342 (QQGRLDSFF).

Belongs to the XPG/RAD2 endonuclease family. FEN1 subfamily. In terms of assembly, interacts with PCNA. Three molecules of FEN1 bind to one PCNA trimer with each molecule binding to one PCNA monomer. PCNA stimulates the nuclease activity without altering cleavage specificity. Requires Mg(2+) as cofactor. Post-translationally, phosphorylated. Phosphorylation upon DNA damage induces relocalization to the nuclear plasma.

Its subcellular location is the nucleus. The protein localises to the nucleolus. It is found in the nucleoplasm. The protein resides in the mitochondrion. Its function is as follows. Structure-specific nuclease with 5'-flap endonuclease and 5'-3' exonuclease activities involved in DNA replication and repair. During DNA replication, cleaves the 5'-overhanging flap structure that is generated by displacement synthesis when DNA polymerase encounters the 5'-end of a downstream Okazaki fragment. It enters the flap from the 5'-end and then tracks to cleave the flap base, leaving a nick for ligation. Also involved in the long patch base excision repair (LP-BER) pathway, by cleaving within the apurinic/apyrimidinic (AP) site-terminated flap. Acts as a genome stabilization factor that prevents flaps from equilibrating into structures that lead to duplications and deletions. Also possesses 5'-3' exonuclease activity on nicked or gapped double-stranded DNA, and exhibits RNase H activity. Also involved in replication and repair of rDNA and in repairing mitochondrial DNA. The chain is Flap endonuclease 1 from Monosiga brevicollis (Choanoflagellate).